A 390-amino-acid polypeptide reads, in one-letter code: Chorismate synthase (390 aa).

NADP(+) contacts are provided by Arg-48 and Arg-54. Residues 125-127, 238-239, Gly-278, 293-297, and Arg-319 contribute to the FMN site; these read RSS, NA, and KPTSS. Residues 359-390 are disordered; that stretch reads PRIPGSTTNQIHPVEMQASAPRAEDPEPDESS.

It belongs to the chorismate synthase family. As to quaternary structure, homotetramer. FMNH2 is required as a cofactor.

It carries out the reaction 5-O-(1-carboxyvinyl)-3-phosphoshikimate = chorismate + phosphate. It participates in metabolic intermediate biosynthesis; chorismate biosynthesis; chorismate from D-erythrose 4-phosphate and phosphoenolpyruvate: step 7/7. Functionally, catalyzes the anti-1,4-elimination of the C-3 phosphate and the C-6 proR hydrogen from 5-enolpyruvylshikimate-3-phosphate (EPSP) to yield chorismate, which is the branch point compound that serves as the starting substrate for the three terminal pathways of aromatic amino acid biosynthesis. This reaction introduces a second double bond into the aromatic ring system. This Nitrosomonas europaea (strain ATCC 19718 / CIP 103999 / KCTC 2705 / NBRC 14298) protein is Chorismate synthase.